A 61-amino-acid chain; its full sequence is Large ribosomal subunit protein bL32 (61 aa).

Residues 1-16 (MAVPKKKTSKSRKNMR) are compositionally biased toward basic residues. Residues 1-20 (MAVPKKKTSKSRKNMRRAHD) form a disordered region.

This sequence belongs to the bacterial ribosomal protein bL32 family.

In Pelobacter propionicus (strain DSM 2379 / NBRC 103807 / OttBd1), this protein is Large ribosomal subunit protein bL32.